The primary structure comprises 380 residues: GPI-anchor transamidase (380 aa).

The N-terminal stretch at 1–19 is a signal peptide; the sequence is MIVQFVALLLLNLLQIIAA. Topologically, residues 20–354 are lumenal; the sequence is ESSHTNNWAV…TRELKYKKHP (335 aa). Residues H145 and C187 contribute to the active site. N307 carries an N-linked (GlcNAc...) asparagine glycan. The helical transmembrane segment at 355 to 375 threads the bilayer; sequence ISRIISAVVCISFSIGFPYYA. The Cytoplasmic segment spans residues 376–380; it reads SKYLK.

Belongs to the peptidase C13 family. In terms of assembly, forms a complex with PIG-T homolog, PIG-U homolog and PIG-S homolog. Post-translationally, the disulfide bond between PIGK/GPI8 and PIGT is important for normal enzyme activity.

Its subcellular location is the endoplasmic reticulum membrane. The protein operates within glycolipid biosynthesis; glycosylphosphatidylinositol-anchor biosynthesis. Functionally, mediates GPI anchoring in the endoplasmic reticulum, by replacing a protein's C-terminal GPI attachment signal peptide with a pre-assembled GPI. During this transamidation reaction, the GPI transamidase forms a carbonyl intermediate with the substrate protein. The sequence is that of GPI-anchor transamidase (gpi8) from Schizosaccharomyces pombe (strain 972 / ATCC 24843) (Fission yeast).